The chain runs to 173 residues: NADH-ubiquinone oxidoreductase chain 6 (173 aa).

Transmembrane regions (helical) follow at residues 1-21 (MTYF…AVAS), 27-47 (YGVV…LSLG), 48-68 (ISFV…VVFV), 87-107 (VIGY…IGGF), and 139-159 (CGVG…FVVL).

The protein belongs to the complex I subunit 6 family.

The protein localises to the mitochondrion membrane. The enzyme catalyses a ubiquinone + NADH + 5 H(+)(in) = a ubiquinol + NAD(+) + 4 H(+)(out). Core subunit of the mitochondrial membrane respiratory chain NADH dehydrogenase (Complex I) that is believed to belong to the minimal assembly required for catalysis. Complex I functions in the transfer of electrons from NADH to the respiratory chain. The immediate electron acceptor for the enzyme is believed to be ubiquinone. This chain is NADH-ubiquinone oxidoreductase chain 6 (MT-ND6), found in Alca torda (Razorbill).